A 448-amino-acid polypeptide reads, in one-letter code: Homogentisate 1,2-dioxygenase (448 aa).

The active-site Proton acceptor is the His-302. The Fe cation site is built by His-345 and Glu-351. Homogentisate is bound by residues Tyr-360 and His-381. Position 381 (His-381) interacts with Fe cation.

This sequence belongs to the homogentisate dioxygenase family. Hexamer; dimer of trimers. Fe cation is required as a cofactor.

It carries out the reaction homogentisate + O2 = 4-maleylacetoacetate + H(+). Its pathway is amino-acid degradation; L-phenylalanine degradation; acetoacetate and fumarate from L-phenylalanine: step 4/6. Its function is as follows. Involved in the catabolism of homogentisate (2,5-dihydroxyphenylacetate or 2,5-OH-PhAc), a central intermediate in the degradation of phenylalanine and tyrosine. Catalyzes the oxidative ring cleavage of the aromatic ring of homogentisate to yield maleylacetoacetate. This chain is Homogentisate 1,2-dioxygenase, found in Ralstonia pickettii (strain 12J).